We begin with the raw amino-acid sequence, 882 residues long: DNA replication helicase (882 aa).

The disordered stretch occupies residues 1–29 (MAAAGGERQLDGQKPGPPHLQQPGDRPAV). 97–104 (GNAGSGKS) is an ATP binding site.

It belongs to the herpesviridae helicase family. Associates with the primase and the primase-associated factor to form the helicase-primase complex.

Its subcellular location is the host nucleus. Its function is as follows. Component of the helicase/primase complex. Unwinds the DNA at the replication forks and generates single-stranded DNA for both leading and lagging strand synthesis. The primase synthesizes short RNA primers on the lagging strand that the polymerase elongates using dNTPs. Possesses helicase-like motifs and therefore may act as the helicase subunit of the complex. The chain is DNA replication helicase from Homo sapiens (Human).